A 1154-amino-acid polypeptide reads, in one-letter code: PDZ domain-containing protein 8 (1154 aa).

A helical membrane pass occupies residues 2–24; it reads GLLLMILASAVLGSFLTLLAQFF. Residues 66-90 form a disordered region; sequence DEEPSGAAPEGGATPTAAPETPAPP. The span at 70–85 shows a compositional bias: low complexity; it reads SGAAPEGGATPTAAPE. Residues 91–294 form the SMP-LTD domain; sequence TRETCYFLNA…LPNYKIRFKP (204 aa). The PDZ domain maps to 366 to 449; that stretch reads TVELIKGNLQ…RVLVYYERPV (84 aa). Phosphoserine occurs at positions 496, 521, and 538. The disordered stretch occupies residues 548 to 612; it reads GSHPLPPKIQ…SADAPNQAEP (65 aa). Residues 840-891 form a Phorbol-ester/DAG-type zinc finger; it reads KHSFQDTQFQNPTWCDYCKKKVWTKAASQCMFCAYVCHKKCQEKCLAETSVC. The disordered stretch occupies residues 955–999; that stretch reads RLSEPGTDLVEPSPKHTPNTSDNEGSDTEVCGPNSPSKRGNSTGI. 2 positions are modified to phosphoserine: S967 and S980. Polar residues predominate over residues 988 to 998; sequence NSPSKRGNSTG. Residues 1028 to 1063 adopt a coiled-coil conformation; the sequence is PTEERIQKLEFMLDKLQNEIDQELEHNNSLVREEKE. A compositionally biased stretch (polar residues) spans 1132 to 1144; it reads SQLIDSQPFSSIS. The segment at 1132-1154 is disordered; sequence SQLIDSQPFSSISDDLFGPSESV.

Interacts with MSN. As to quaternary structure, (Microbial infection) Interacts with HIV-1 Gag polyprotein p55.

The protein resides in the endoplasmic reticulum membrane. Its function is as follows. Molecular tethering protein that connects endoplasmic reticulum and mitochondria membranes. PDZD8-dependent endoplasmic reticulum-mitochondria membrane tethering is essential for endoplasmic reticulum-mitochondria Ca(2+) transfer. In neurons, involved in the regulation of dendritic Ca(2+) dynamics by regulating mitochondrial Ca(2+) uptake in neurons. Plays an indirect role in the regulation of cell morphology and cytoskeletal organization. May inhibit herpes simplex virus 1 infection at an early stage. This is PDZ domain-containing protein 8 from Homo sapiens (Human).